A 309-amino-acid chain; its full sequence is Tagatose-6-phosphate kinase (309 aa).

The protein belongs to the carbohydrate kinase PfkB family. LacC subfamily.

The enzyme catalyses D-tagatofuranose 6-phosphate + ATP = D-tagatofuranose 1,6-bisphosphate + ADP + H(+). It functions in the pathway carbohydrate metabolism; D-tagatose 6-phosphate degradation; D-glyceraldehyde 3-phosphate and glycerone phosphate from D-tagatose 6-phosphate: step 1/2. The sequence is that of Tagatose-6-phosphate kinase from Streptococcus pneumoniae serotype 19F (strain G54).